The sequence spans 273 residues: Imidazole glycerol phosphate synthase subunit HisF (273 aa).

Catalysis depends on residues D11 and D134.

Belongs to the HisA/HisF family. As to quaternary structure, heterodimer of HisH and HisF.

It is found in the cytoplasm. The enzyme catalyses 5-[(5-phospho-1-deoxy-D-ribulos-1-ylimino)methylamino]-1-(5-phospho-beta-D-ribosyl)imidazole-4-carboxamide + L-glutamine = D-erythro-1-(imidazol-4-yl)glycerol 3-phosphate + 5-amino-1-(5-phospho-beta-D-ribosyl)imidazole-4-carboxamide + L-glutamate + H(+). It functions in the pathway amino-acid biosynthesis; L-histidine biosynthesis; L-histidine from 5-phospho-alpha-D-ribose 1-diphosphate: step 5/9. Functionally, IGPS catalyzes the conversion of PRFAR and glutamine to IGP, AICAR and glutamate. The HisF subunit catalyzes the cyclization activity that produces IGP and AICAR from PRFAR using the ammonia provided by the HisH subunit. The polypeptide is Imidazole glycerol phosphate synthase subunit HisF (Methanococcoides burtonii (strain DSM 6242 / NBRC 107633 / OCM 468 / ACE-M)).